Here is a 125-residue protein sequence, read N- to C-terminus: MINSPRVCIQVQSVYIEAQSSPDDERYVFAYTVTIRNLGRAPVQLLGRYWLITNGHGRETEVQGEGVVGVQPHIAPGEEYQYTSGAVIETPLGTMQGHYEMIDEKGVAFTIDIPVFRLAVPTLIH.

One can recognise an ApaG domain in the interval 1–125; it reads MINSPRVCIQ…FRLAVPTLIH (125 aa).

The sequence is that of Protein ApaG from Citrobacter koseri (strain ATCC BAA-895 / CDC 4225-83 / SGSC4696).